Consider the following 57-residue polypeptide: UPF0391 membrane protein RPC_3278 (57 aa).

2 helical membrane passes run 4–24 and 30–50; these read WVITFLVVALIAGILGFGGIA and IAKIIFFIAVVLFLVSAVVGL.

The protein belongs to the UPF0391 family.

Its subcellular location is the cell membrane. The protein is UPF0391 membrane protein RPC_3278 of Rhodopseudomonas palustris (strain BisB18).